We begin with the raw amino-acid sequence, 20 residues long: Short cationic peptide-4a (20 aa).

Glutamate 20 carries the glutamic acid 1-amide modification.

Expressed by the venom gland.

It localises to the secreted. This is Short cationic peptide-4a from Cupiennius salei (American wandering spider).